The primary structure comprises 284 residues: NADH-cytochrome b5 reductase 1 (284 aa).

The helical transmembrane segment at 8-28 (PLFVFSTIAIIISTFVIFYFV) threads the bilayer. One can recognise an FAD-binding FR-type domain in the interval 41–144 (DTFQKFPLIE…RGPKGFFTYT (104 aa)). FAD-binding positions include 124 to 139 (DSKK…GPKG) and 150 to 182 (SFGM…KISL).

Belongs to the flavoprotein pyridine nucleotide cytochrome reductase family. Monomer. Component of the 2-(3-amino-3-carboxypropyl)histidine synthase complex composed of DPH1, DPH2, DPH3 and a NADH-dependent reductase, predominantly CBR1. FAD serves as cofactor.

It localises to the mitochondrion outer membrane. It carries out the reaction 2 Fe(III)-[cytochrome b5] + NADH = 2 Fe(II)-[cytochrome b5] + NAD(+) + H(+). The enzyme catalyses 2 Fe(3+)-[Dph3] + NADH = 2 Fe(2+)-[Dph3] + NAD(+) + H(+). The protein operates within protein modification; peptidyl-diphthamide biosynthesis. Its function is as follows. NADH-dependent reductase for DPH3 and cytochrome b5. Required for the first step of diphthamide biosynthesis, a post-translational modification of histidine which occurs in elongation factor 2. DPH1 and DPH2 transfer a 3-amino-3-carboxypropyl (ACP) group from S-adenosyl-L-methionine (SAM) to a histidine residue, the reaction is assisted by a reduction system comprising DPH3 and a NADH-dependent reductase, predominantly CBR1. By reducing DPH3, also involved in the formation of the tRNA wobble base modification mcm5s 2U (5-methoxycarbonylmethyl-2-thiouridine), mediated by the elongator complex. The cytochrome b5/NADH cytochrome b5 reductase electron transfer system supports the catalytic activity of several sterol biosynthetic enzymes. This Scheffersomyces stipitis (strain ATCC 58785 / CBS 6054 / NBRC 10063 / NRRL Y-11545) (Yeast) protein is NADH-cytochrome b5 reductase 1 (CBR1).